Reading from the N-terminus, the 493-residue chain is NADH-ubiquinone oxidoreductase 51 kDa subunit, mitochondrial (493 aa).

The N-terminal 27 residues, 1–27 (MLSRTAAPTKASARTLSRAAAEQCRTF), are a transit peptide targeting the mitochondrion. 96-105 (GRGGAGFPSG) is a binding site for NAD(+). An FMN-binding site is contributed by 212–259 (GAGAYVCGEETSLIESLEGKPGKPRLKPPFPAAVGLFGCPSTVANVET). Residues Cys-391, Cys-394, Cys-397, and Cys-437 each coordinate [4Fe-4S] cluster.

It belongs to the complex I 51 kDa subunit family. As to quaternary structure, complex I is composed of about 40 different subunits. This is a component of the flavoprotein-sulfur (FP) fragment of the enzyme. FMN is required as a cofactor. The cofactor is [4Fe-4S] cluster.

It is found in the mitochondrion inner membrane. The catalysed reaction is a ubiquinone + NADH + 5 H(+)(in) = a ubiquinol + NAD(+) + 4 H(+)(out). Core subunit of the mitochondrial membrane respiratory chain NADH dehydrogenase (Complex I) that is believed to belong to the minimal assembly required for catalysis. Complex I functions in the transfer of electrons from NADH to the respiratory chain. The immediate electron acceptor for the enzyme is believed to be ubiquinone. This chain is NADH-ubiquinone oxidoreductase 51 kDa subunit, mitochondrial (nuo-51), found in Neurospora crassa (strain ATCC 24698 / 74-OR23-1A / CBS 708.71 / DSM 1257 / FGSC 987).